A 138-amino-acid chain; its full sequence is Drosulfakinins (138 aa).

A signal peptide spans 1–33 (MGLRSCTHFATLVMPLWALAFCFLVLVPVPAQT). The propeptide occupies 34 to 73 (TSLQISKGDRRLQDLESNMGAESDQPNANLVGTSLSRFGD). Phe82 is subject to Phenylalanine amide. Residues 86–108 (VPRPIIPIELDLLMDNDDENTKA) constitute a propeptide that is removed on maturation. Tyr114 carries the sulfotyrosine modification. Phe119 is modified (phenylalanine amide). The residue at position 131 (Tyr131) is a Sulfotyrosine. Phenylalanine amide is present on Phe136.

This sequence belongs to the gastrin/cholecystokinin family.

The protein localises to the secreted. Functionally, drosulfakinin-0 (DSK 0) plays diverse biological roles including regulating gut muscle contraction in adults but not in larvae. The protein is Drosulfakinins of Drosophila teissieri (Fruit fly).